The following is a 35-amino-acid chain: Dolichyl-diphosphooligosaccharide--protein glycosyltransferase subunit 4C (35 aa).

The Lumenal segment spans residues 1–8 (MFDDQDLG). Residues 9–29 (FFANFLGIFIFILVIAYHFVM) traverse the membrane as a helical segment. Residues 30 to 35 (ADPKFE) are Cytoplasmic-facing.

The protein belongs to the OST4 family. Component of the oligosaccharyltransferase (OST) complex.

Its subcellular location is the endoplasmic reticulum membrane. Its function is as follows. Subunit of the oligosaccharyl transferase (OST) complex that catalyzes the initial transfer of a defined glycan (Glc(3)Man(9)GlcNAc(2) in eukaryotes) from the lipid carrier dolichol-pyrophosphate to an asparagine residue within an Asn-X-Ser/Thr consensus motif in nascent polypeptide chains, the first step in protein N-glycosylation. N-glycosylation occurs cotranslationally and the complex associates with the Sec61 complex at the channel-forming translocon complex that mediates protein translocation across the endoplasmic reticulum (ER). All subunits are required for a maximal enzyme activity. In Arabidopsis thaliana (Mouse-ear cress), this protein is Dolichyl-diphosphooligosaccharide--protein glycosyltransferase subunit 4C (OST4C).